A 585-amino-acid polypeptide reads, in one-letter code: Arginine--tRNA ligase (585 aa).

Positions 131–141 match the 'HIGH' region motif; sequence ANPTGPMHVGH.

It belongs to the class-I aminoacyl-tRNA synthetase family. Monomer.

It localises to the cytoplasm. It catalyses the reaction tRNA(Arg) + L-arginine + ATP = L-arginyl-tRNA(Arg) + AMP + diphosphate. This Allorhizobium ampelinum (strain ATCC BAA-846 / DSM 112012 / S4) (Agrobacterium vitis (strain S4)) protein is Arginine--tRNA ligase.